A 160-amino-acid chain; its full sequence is Phosphopantetheine adenylyltransferase (160 aa).

Ser-11 serves as a coordination point for substrate. ATP contacts are provided by residues Ser-11–Phe-12 and His-19. Lys-43, Leu-75, and Arg-89 together coordinate substrate. ATP is bound by residues Gly-90–Arg-92, Glu-100, and Tyr-125–Ser-131.

The protein belongs to the bacterial CoaD family. Homohexamer. The cofactor is Mg(2+).

Its subcellular location is the cytoplasm. The catalysed reaction is (R)-4'-phosphopantetheine + ATP + H(+) = 3'-dephospho-CoA + diphosphate. The protein operates within cofactor biosynthesis; coenzyme A biosynthesis; CoA from (R)-pantothenate: step 4/5. Its function is as follows. Reversibly transfers an adenylyl group from ATP to 4'-phosphopantetheine, yielding dephospho-CoA (dPCoA) and pyrophosphate. The chain is Phosphopantetheine adenylyltransferase from Staphylococcus aureus (strain Mu3 / ATCC 700698).